The sequence spans 385 residues: Signal transduction histidine-protein kinase/phosphatase DegS (385 aa).

Residues 31-141 (QIGEQSRQQY…IERSESLVSQ (111 aa)) adopt a coiled-coil conformation. Ser-76 is subject to Phosphoserine. The region spanning 183–385 (RVSREIHDGP…FIMIKVPLSL (203 aa)) is the Histidine kinase domain. Phosphohistidine; by autocatalysis is present on His-189.

Autophosphorylated. Phosphorylated in vitro at Ser-76 by the serine/threonine-protein kinase YbdM, which stimulates the phosphate transfer to DegU.

The protein resides in the cytoplasm. It catalyses the reaction ATP + protein L-histidine = ADP + protein N-phospho-L-histidine.. Its activity is regulated as follows. Regulated via serine phosphorylation of its input domain. Phosphotransfer from DegS to DegU is stimulated by phosphorylation on Ser-76 and by DegQ. Functionally, member of the two-component regulatory system DegS/DegU, which plays an important role in the transition growth phase. Involved in the control of expression of different cellular functions, including production of degradative enzymes such as the neutral and alkaline proteases, flagellum formation and biofilm formation. Acts both as a protein kinase that undergoes autophosphorylation and subsequently transfers the phosphate to DegU, and as a protein phosphatase that dephosphorylates phospho-DegU. In Bacillus subtilis (strain 168), this protein is Signal transduction histidine-protein kinase/phosphatase DegS (degS).